A 301-amino-acid chain; its full sequence is tRNA pseudouridine synthase B (301 aa).

Residue Asp38 is the Nucleophile of the active site.

It belongs to the pseudouridine synthase TruB family. Type 1 subfamily.

It carries out the reaction uridine(55) in tRNA = pseudouridine(55) in tRNA. Its function is as follows. Responsible for synthesis of pseudouridine from uracil-55 in the psi GC loop of transfer RNAs. In Clostridioides difficile (strain 630) (Peptoclostridium difficile), this protein is tRNA pseudouridine synthase B.